We begin with the raw amino-acid sequence, 237 residues long: BTB/POZ domain-containing protein KCTD6 (237 aa).

A BTB domain is found at 12-81; that stretch reads HPVTLNVGGH…LRTSELTLPV (70 aa).

As to quaternary structure, homopentamer. May be part of a cullin-containing E3 ubiquitin-protein ligase complex.

It participates in protein modification; protein ubiquitination. In terms of biological role, probable substrate-specific adapter of a cullin-containing E3 ubiquitin-protein ligase complex mediating the ubiquitination and subsequent proteasomal degradation of target proteins. This is BTB/POZ domain-containing protein KCTD6 (kctd6) from Danio rerio (Zebrafish).